The following is a 139-amino-acid chain: Large ribosomal subunit protein bL20 (139 aa).

It belongs to the bacterial ribosomal protein bL20 family.

Functionally, binds directly to 23S ribosomal RNA and is necessary for the in vitro assembly process of the 50S ribosomal subunit. It is not involved in the protein synthesizing functions of that subunit. The polypeptide is Large ribosomal subunit protein bL20 (Leuconostoc citreum (strain KM20)).